A 464-amino-acid chain; its full sequence is UDP-N-acetylmuramoylalanine--D-glutamate ligase (464 aa).

Position 112 to 118 (112 to 118 (GTDGKTT)) interacts with ATP.

This sequence belongs to the MurCDEF family.

The protein localises to the cytoplasm. It catalyses the reaction UDP-N-acetyl-alpha-D-muramoyl-L-alanine + D-glutamate + ATP = UDP-N-acetyl-alpha-D-muramoyl-L-alanyl-D-glutamate + ADP + phosphate + H(+). It functions in the pathway cell wall biogenesis; peptidoglycan biosynthesis. In terms of biological role, cell wall formation. Catalyzes the addition of glutamate to the nucleotide precursor UDP-N-acetylmuramoyl-L-alanine (UMA). This chain is UDP-N-acetylmuramoylalanine--D-glutamate ligase, found in Chlorobium phaeobacteroides (strain DSM 266 / SMG 266 / 2430).